The chain runs to 578 residues: MRQQDAPKPTPAACRCSGLARRVLTIAFALLILGLMTWAYAAGVPLASDRYGLLAFGLYGAFLSAHLVAQSLFAYLEHRRVAAAARGPLDAATARSVALTISAYQEDPAYLRQCLASARALLYPRARLRVLMVVDGNRAEDLYMVDMFREVFADEDPATYVWDGNYHQPWEPAAAGAVGAGAYREVEAEDPGRLAVEALVRTRRCVCVAQRWGGKREVMYTAFKALGDSVDYVQVCDSDTRLDPMALLELVRVLDEDPRVGAVGGDVRILNPLDSWVSFLSSLRYWVAFNVERACQSYFHCVSCISGPLGLYRNNLLQQFLEAWYNQKFLGTHCTFGDDRHLTNRMLSMGYATKYTSRSRCYSETPSSFLRWLSQQTRWSKSYFREWLYNALWWHRHHAWMTYEAVVSGLFPFFVAATVLRLFYAGRPWALLWVLLCVQGVALAKAAFAAWLRGCLRMVLLSLYAPLYMCGLLPAKFLALVTMNQSGWGTSGRRKLAANYVPLLPLALWALLLLGGLVRSVAHEARADWSGPSRAAEAYHLAAGAGAYVGYWVAMLTLYWVGVRRLCRRRTGGYRVQV.

At 1–25 (MRQQDAPKPTPAACRCSGLARRVLT) the chain is on the cytoplasmic side. A helical membrane pass occupies residues 26–46 (IAFALLILGLMTWAYAAGVPL). The Extracellular segment spans residues 47-52 (ASDRYG). A helical transmembrane segment spans residues 53-73 (LLAFGLYGAFLSAHLVAQSLF). Residues 74-399 (AYLEHRRVAA…NALWWHRHHA (326 aa)) are Cytoplasmic-facing. A helical membrane pass occupies residues 400 to 420 (WMTYEAVVSGLFPFFVAATVL). Residues 421-430 (RLFYAGRPWA) are Extracellular-facing. The helical transmembrane segment at 431-451 (LLWVLLCVQGVALAKAAFAAW) threads the bilayer. Residues 452 to 457 (LRGCLR) lie on the Cytoplasmic side of the membrane. A helical transmembrane segment spans residues 458–478 (MVLLSLYAPLYMCGLLPAKFL). The Extracellular segment spans residues 479–497 (ALVTMNQSGWGTSGRRKLA). Residues 498–518 (ANYVPLLPLALWALLLLGGLV) traverse the membrane as a helical segment. The Cytoplasmic segment spans residues 519–540 (RSVAHEARADWSGPSRAAEAYH). The chain crosses the membrane as a helical span at residues 541–561 (LAAGAGAYVGYWVAMLTLYWV). Over 562–578 (GVRRLCRRRTGGYRVQV) the chain is Extracellular.

Belongs to the NodC/HAS family. Requires Mg(2+) as cofactor. In terms of tissue distribution, widely expressed. Highly expressed in ovary followed by spleen, thymus, prostate, testes and large intestine. Weakly expressed in small intestine.

The protein resides in the membrane. The enzyme catalyses [hyaluronan](n) + UDP-N-acetyl-alpha-D-glucosamine = N-acetyl-beta-D-glucosaminyl-(1-&gt;4)-[hyaluronan](n) + UDP + H(+). The catalysed reaction is N-acetyl-beta-D-glucosaminyl-(1-&gt;4)-[hyaluronan](n) + UDP-alpha-D-glucuronate = [hyaluronan](n+1) + UDP + H(+). It functions in the pathway glycan biosynthesis; hyaluronan biosynthesis. Its function is as follows. Catalyzes the addition of GlcNAc or GlcUA monosaccharides to the nascent hyaluronan polymer. Therefore, it is essential to hyaluronan synthesis a major component of most extracellular matrices that has a structural role in tissues architectures and regulates cell adhesion, migration and differentiation. This is one of the isozymes catalyzing that reaction. Also able to catalyze the synthesis of chito-oligosaccharide depending on the substrate. This chain is Hyaluronan synthase 1 (HAS1), found in Homo sapiens (Human).